The chain runs to 210 residues: Neuroendocrine protein 7B2 (210 aa).

The signal sequence occupies residues 1–24 (MTSRMAILSGLLFWLLLEWNPAFA). Residues C118 and C128 are joined by a disulfide bond. Residues S139 and S203 each carry the phosphoserine modification.

It belongs to the 7B2 family. In terms of assembly, interacts with PCSK2/PC2 early in the secretory pathway. Dissociation occurs at later stages. Post-translationally, proteolytically cleaved in the Golgi by a furin-like convertase to generate bioactive peptides. Sulfated on tyrosine residues.

Its subcellular location is the secreted. Acts as a molecular chaperone for PCSK2/PC2, preventing its premature activation in the regulated secretory pathway. Binds to inactive PCSK2 in the endoplasmic reticulum and facilitates its transport from there to later compartments of the secretory pathway where it is proteolytically matured and activated. Also required for cleavage of PCSK2 but does not appear to be involved in its folding. Plays a role in regulating pituitary hormone secretion. The C-terminal peptide inhibits PCSK2 in vitro. In Rattus norvegicus (Rat), this protein is Neuroendocrine protein 7B2 (Scg5).